The sequence spans 215 residues: Tricarboxylate transporter ALT9 (215 aa).

2 Solcar repeats span residues 18–106 (TTVV…LAPM) and 111–197 (CGVS…VVRL). 3 helical membrane-spanning segments follow: residues 19-39 (TVVG…VLVL), 112-132 (GVST…YCTM), and 182-202 (VAGA…GFLV).

It belongs to the mitochondrial carrier (TC 2.A.29) family.

The protein resides in the mitochondrion inner membrane. It participates in mycotoxin biosynthesis. Functionally, tricarboxylate transporter; part of the gene cluster that mediates the biosynthesis of the host-selective toxins (HSTs) AAL-toxins, sphinganine-analog mycotoxins responsible for Alternaria stem canker on tomato by the tomato pathotype. The biosynthesis starts with the polyketide synthase ALT1-catalyzed C-16 carbon chain assembly from one starter acetyl-CoA unit with malonyl-CoA extender units. ALT1 also selectively transfers methyl groups at the first and the third cycle of chain elongation for AAL toxin. The C-16 polyketide chain is released from the enzyme by a nucleophilic attack of a carbanion, which is derived from R-carbon of glycin by decarboxylation, on the carbonyl carbon of polyketide acyl chain. This step is probably catalyzed by a pyridoxal 5'-phosphate-dependent aminoacyl transferase ALT4. The respective functions of the other enzymes encoded by the cluster have still to be elucidated. The sphingosine N-acyltransferase-like protein ALT7 seems not to act as a resistance/self-tolerance factor against the toxin in the toxin biosynthetic gene cluster, contrary to what is expected. This chain is Tricarboxylate transporter ALT9, found in Alternaria alternata (Alternaria rot fungus).